The primary structure comprises 103 residues: Small ribosomal subunit protein uS10 (103 aa).

This sequence belongs to the universal ribosomal protein uS10 family. In terms of assembly, part of the 30S ribosomal subunit.

Functionally, involved in the binding of tRNA to the ribosomes. In Saccharophagus degradans (strain 2-40 / ATCC 43961 / DSM 17024), this protein is Small ribosomal subunit protein uS10.